Reading from the N-terminus, the 196-residue chain is GTP cyclohydrolase 1 (196 aa).

The Zn(2+) site is built by Cys-86, His-89, and Cys-158.

The protein belongs to the GTP cyclohydrolase I family. Toroid-shaped homodecamer, composed of two pentamers of five dimers.

It catalyses the reaction GTP + H2O = 7,8-dihydroneopterin 3'-triphosphate + formate + H(+). It functions in the pathway cofactor biosynthesis; 7,8-dihydroneopterin triphosphate biosynthesis; 7,8-dihydroneopterin triphosphate from GTP: step 1/1. The protein is GTP cyclohydrolase 1 of Clostridium botulinum (strain ATCC 19397 / Type A).